A 1946-amino-acid polypeptide reads, in one-letter code: Sickle tail protein (1946 aa).

2 disordered regions span residues 1–83 (MEES…GMQP) and 113–176 (ERLR…VRSA). The segment covering 18-36 (DSRQMPQQGRSNLHVTSQE) has biased composition (polar residues). Residues 38-47 (AACRRPRERL) show a composition bias toward basic and acidic residues. S169 is modified (phosphoserine). Y244 is modified (phosphotyrosine). 2 disordered regions span residues 305-324 (HPPHVIPNSPPSTPVPHSLP) and 339-374 (AIPGNATIPRDRLSSLPVSRSISPSPSAILERRDVK). Residues 308-324 (HVIPNSPPSTPVPHSLP) are compositionally biased toward pro residues. Over residues 352-367 (SSLPVSRSISPSPSAI) the composition is skewed to low complexity. S357 is a glycosylation site (O-linked (GlcNAc) serine). A phosphoserine mark is found at S361 and S365. Y393 carries the phosphotyrosine modification. A disordered region spans residues 455–512 (SRKYPDSHLPTLGSKTPPASPHRVGDLRMIDLHPHLNTHGPPHTLQPDRASPSRQSFK). The residue at position 470 (T470) is a Phosphothreonine. At S474 the chain carries Phosphoserine. Residues 477–488 (RVGDLRMIDLHP) show a composition bias toward basic and acidic residues. 2 coiled-coil regions span residues 557–581 (RETRERMQAMEKQIASLTGLVQSAL) and 644–685 (TSLL…ELEI). S809 carries the post-translational modification Phosphoserine. 2 disordered regions span residues 853–875 (EETAHAPGQPLHCSTGSPGDVKS) and 891–947 (SPVV…PVNG). 2 stretches are compositionally biased toward polar residues: residues 891 to 909 (SPVVMQPSQHSSALMNPAQ) and 927 to 947 (QEVTSAQSAPGPQSPQTPVNG). Residues 962–990 (SAKNRAVSIEKAEKKWEEKRQNLEHYNGK) adopt a coiled-coil conformation. The interval 1008–1221 (PNLEMPPASS…LRPSGPPKWE (214 aa)) is disordered. Phosphoserine is present on residues S1032, S1035, S1038, and S1049. Positions 1049–1058 (SPPPPPPPPR) are enriched in pro residues. Residues 1151–1162 (NPNSHAEQSRAN) show a composition bias toward polar residues. Residues 1176-1194 (PKEKKNLEFYHEDVRKSDV) are compositionally biased toward basic and acidic residues. S1466 is modified (phosphoserine). Residues 1469–1495 (FEECDEELERMLTEEKIEEEEEDENED) are a coiled coil. 3 disordered regions span residues 1482 to 1567 (EEKI…VDDQ), 1622 to 1664 (AKRF…RKST), and 1691 to 1946 (VDTS…KETS). The span at 1484-1495 (KIEEEEEDENED) shows a compositional bias: acidic residues. Residues 1498–1508 (VRTSSQMSCEQ) show a composition bias toward polar residues. 2 stretches are compositionally biased toward basic and acidic residues: residues 1509-1518 (VDSRSDRMGQ) and 1622-1644 (AKRFEITRSQPEDALKTMARRQE). Residues 1659 to 1688 (EIRKSTYRTLDSLEQTIKQLENTISEMSPR) are a coiled coil. Residues 1739-1759 (KGSSTTPQTSRMPVPMTSKNR) show a composition bias toward polar residues. S1741 carries the phosphoserine modification. Residues 1765 to 1777 (KASKQSKLQDPRQ) are compositionally biased toward basic and acidic residues. Residues 1806-1825 (ALSPSSGKSSSLPSASGDSS) show a composition bias toward low complexity. S1843 bears the Phosphoserine mark. Residues 1851–1866 (HSASLIPSVSNGSLKF) are compositionally biased toward polar residues. The span at 1890–1899 (AAPTTSSSSS) shows a compositional bias: low complexity. A phosphoserine mark is found at S1899, S1902, and S1905. A compositionally biased stretch (polar residues) spans 1920-1946 (HTPSLASYKAQNGSSSKATPSTAKETS).

In terms of assembly, interacts with CPNE4 (via VWFA domain). As to expression, expressed predominantly in the notochord and mesonephros during embryogenesis as well as in other areas such as the epithalamus sulcus, lens vesicle, inner retinal layer, heart, hepatic primordial surface, infundibulum, surface ectoderm, hind gut and limb bud mesenchyme. In adults, expressed in a range of tissues including the nucleus pulposus, corpus callosum, kidney, cardiac muscle, Sertoli cells and hair follicles.

It localises to the cytoplasm. It is found in the cytoskeleton. The protein resides in the microtubule organizing center. The protein localises to the centrosome. In terms of biological role, required for normal development of intervertebral disks. In Mus musculus (Mouse), this protein is Sickle tail protein.